A 442-amino-acid polypeptide reads, in one-letter code: Coiled-coil domain-containing protein 112 (442 aa).

Coiled-coil stretches lie at residues 23-116 (LEEL…RRIE) and 217-249 (LEEKKKESIQNWKTKKQQKKEEILKLKEKVDTV). Disordered regions lie at residues 245–272 (KVDTVPLPSQSKAEDSPKQREEQRKKQK), 289–312 (KLASQLREEEEKERKQQRERQRQS), and 392–442 (EKVE…RQGI). Composition is skewed to basic and acidic residues over residues 256–268 (KAEDSPKQREEQR) and 294–310 (LREEEEKERKQQRERQR). The stretch at 281-400 (RKSLEMSAKL…KEKVENNVSR (120 aa)) forms a coiled coil.

It localises to the cytoplasm. Its subcellular location is the cytoskeleton. The protein localises to the microtubule organizing center. The protein resides in the centrosome. It is found in the centriolar satellite. This Mus musculus (Mouse) protein is Coiled-coil domain-containing protein 112 (Ccdc112).